Consider the following 200-residue polypeptide: Ras-related protein RABF2a (200 aa).

Residue 17-25 (GDVGAGKSS) participates in GTP binding. An Effector region motif is present at residues 39–47 (QESTIGAAF). Residues 65-69 (DTAGQ), 123-126 (NKAD), and 153-154 (SA) each bind GTP. Residues Cys-198 and Cys-199 are each lipidated (S-geranylgeranyl cysteine).

Belongs to the small GTPase superfamily. Rab family. Interacts with VPS9A. Interacts with EREX (via PX domain). Binds to VPS3. As to expression, high in stem, root, and inflorescence.

The protein localises to the endosome membrane. The protein resides in the prevacuolar compartment membrane. Functionally, involved in the trafficking of soluble cargo proteins from the prevacuolar compartment to the central vacuole. Involved in vacuolar transport of storage proteins with EREX as effector. Regulates membrane trafficking to protein storage vacuoles (PSVs). This chain is Ras-related protein RABF2a (RABF2A), found in Arabidopsis thaliana (Mouse-ear cress).